Consider the following 324-residue polypeptide: Alkanal monooxygenase beta chain (324 aa).

Belongs to the bacterial luciferase oxidoreductase family. In terms of assembly, heterodimer of an alpha and a beta chain.

It catalyses the reaction a long-chain fatty aldehyde + FMNH2 + O2 = a long-chain fatty acid + hnu + FMN + H2O + 2 H(+). Light-emitting reaction in luminous bacteria. The specific role of the beta subunit is unknown, but it is absolutely required for bioluminescence activity. This Photorhabdus luminescens (Xenorhabdus luminescens) protein is Alkanal monooxygenase beta chain (luxB).